The chain runs to 155 residues: Ribosomal RNA large subunit methyltransferase H (155 aa).

S-adenosyl-L-methionine is bound by residues L73, G104, and 123–128 (LSPLTL).

Belongs to the RNA methyltransferase RlmH family. As to quaternary structure, homodimer.

Its subcellular location is the cytoplasm. It catalyses the reaction pseudouridine(1915) in 23S rRNA + S-adenosyl-L-methionine = N(3)-methylpseudouridine(1915) in 23S rRNA + S-adenosyl-L-homocysteine + H(+). In terms of biological role, specifically methylates the pseudouridine at position 1915 (m3Psi1915) in 23S rRNA. The polypeptide is Ribosomal RNA large subunit methyltransferase H (Pseudomonas putida (strain GB-1)).